The sequence spans 183 residues: Dual-action ribosomal maturation protein DarP (183 aa).

The interval 1-21 is disordered; that stretch reads MKQKPEDWLNDVPDNQEDDED.

It belongs to the DarP family.

Its subcellular location is the cytoplasm. Member of a network of 50S ribosomal subunit biogenesis factors which assembles along the 30S-50S interface, preventing incorrect 23S rRNA structures from forming. Promotes peptidyl transferase center (PTC) maturation. This is Dual-action ribosomal maturation protein DarP from Pectobacterium atrosepticum (strain SCRI 1043 / ATCC BAA-672) (Erwinia carotovora subsp. atroseptica).